A 314-amino-acid chain; its full sequence is Large ribosomal subunit protein uL10 (314 aa).

Residues 285–314 form a disordered region; it reads GAAAGGAAAEEEKEEEEESDEEGGFGDLFG. The segment covering 293–308 has biased composition (acidic residues); sequence AEEEKEEEEESDEEGG. Residue S303 is modified to Phosphoserine; by CK1.

Belongs to the universal ribosomal protein uL10 family. Component of the large ribosomal subunit. P0 forms a pentameric complex by interaction with dimers of P1 and P2. In terms of processing, phosphorylated.

Functionally, ribosomal protein P0 is the functional equivalent of E.coli protein L10. The sequence is that of Large ribosomal subunit protein uL10 from Podospora anserina (Pleurage anserina).